The sequence spans 423 residues: UDP-N-acetylglucosamine 1-carboxyvinyltransferase 2 (423 aa).

23-24 contacts phosphoenolpyruvate; it reads KN. Position 93 (R93) interacts with UDP-N-acetyl-alpha-D-glucosamine. The Proton donor role is filled by C117. The residue at position 117 (C117) is a 2-(S-cysteinyl)pyruvic acid O-phosphothioketal. UDP-N-acetyl-alpha-D-glucosamine-binding positions include 122–126, D305, and I327; that span reads RPIDQ.

Belongs to the EPSP synthase family. MurA subfamily.

The protein resides in the cytoplasm. The catalysed reaction is phosphoenolpyruvate + UDP-N-acetyl-alpha-D-glucosamine = UDP-N-acetyl-3-O-(1-carboxyvinyl)-alpha-D-glucosamine + phosphate. Its pathway is cell wall biogenesis; peptidoglycan biosynthesis. In terms of biological role, cell wall formation. Adds enolpyruvyl to UDP-N-acetylglucosamine. In Listeria innocua serovar 6a (strain ATCC BAA-680 / CLIP 11262), this protein is UDP-N-acetylglucosamine 1-carboxyvinyltransferase 2.